A 444-amino-acid polypeptide reads, in one-letter code: N-succinylarginine dihydrolase (444 aa).

Residues A19–S28, N110, and H137–R138 each bind substrate. Residue E174 is part of the active site. R214 contributes to the substrate binding site. H250 is a catalytic residue. 2 residues coordinate substrate: D252 and N362. C368 serves as the catalytic Nucleophile.

The protein belongs to the succinylarginine dihydrolase family. In terms of assembly, homodimer.

The enzyme catalyses N(2)-succinyl-L-arginine + 2 H2O + 2 H(+) = N(2)-succinyl-L-ornithine + 2 NH4(+) + CO2. The protein operates within amino-acid degradation; L-arginine degradation via AST pathway; L-glutamate and succinate from L-arginine: step 2/5. In terms of biological role, catalyzes the hydrolysis of N(2)-succinylarginine into N(2)-succinylornithine, ammonia and CO(2). The protein is N-succinylarginine dihydrolase of Shewanella denitrificans (strain OS217 / ATCC BAA-1090 / DSM 15013).